Here is a 327-residue protein sequence, read N- to C-terminus: Fe-S cluster assembly protein DRE2 (327 aa).

Over residues 1–14 (MSPATVTIDTTPDF) the composition is skewed to polar residues. Disordered stretches follow at residues 1–20 (MSPA…GGAP) and 153–179 (NKGE…AAAA). The N-terminal SAM-like domain stretch occupies residues 17–144 (GGAPHSTLLL…EKPAEEVAAV (128 aa)). Positions 145 to 214 (PLKFLKKKNK…EDELMTEEDL (70 aa)) are linker. Over residues 164 to 179 (PAAATQPTAPAPAAAA) the composition is skewed to low complexity. [2Fe-2S] cluster contacts are provided by Cys-224, Cys-235, Cys-238, and Cys-240. Positions 224–240 (CAPKPGKKRRACKDCTC) are fe-S binding site A. 4 residues coordinate [4Fe-4S] cluster: Cys-290, Cys-293, Cys-301, and Cys-304. 2 short sequence motifs (cx2C motif) span residues 290 to 293 (CGSC) and 301 to 304 (CADC). Positions 290–304 (CGSCALGDAFRCADC) are fe-S binding site B.

The protein belongs to the anamorsin family. Monomer. Interacts with TAH18. Interacts with MIA40. [2Fe-2S] cluster serves as cofactor. Requires [4Fe-4S] cluster as cofactor.

It localises to the cytoplasm. The protein localises to the mitochondrion intermembrane space. Functionally, component of the cytosolic iron-sulfur (Fe-S) protein assembly (CIA) machinery required for the maturation of extramitochondrial Fe-S proteins. Part of an electron transfer chain functioning in an early step of cytosolic Fe-S biogenesis, facilitating the de novo assembly of a [4Fe-4S] cluster on the scaffold complex CFD1-NBP35. Electrons are transferred to DRE2 from NADPH via the FAD- and FMN-containing protein TAH18. TAH18-DRE2 are also required for the assembly of the diferric tyrosyl radical cofactor of ribonucleotide reductase (RNR), probably by providing electrons for reduction during radical cofactor maturation in the catalytic small subunit RNR2. This Pyricularia oryzae (strain 70-15 / ATCC MYA-4617 / FGSC 8958) (Rice blast fungus) protein is Fe-S cluster assembly protein DRE2.